The chain runs to 290 residues: Probable protein phosphatase 2C 62 (290 aa).

Residues 38-288 enclose the PPM-type phosphatase domain; sequence KHGYHLVKGK…DDISCIVVKF (251 aa). Mn(2+) is bound by residues Asp75, Gly76, Asp240, and Asp279.

Belongs to the PP2C family. It depends on Mg(2+) as a cofactor. Mn(2+) is required as a cofactor.

The catalysed reaction is O-phospho-L-seryl-[protein] + H2O = L-seryl-[protein] + phosphate. It carries out the reaction O-phospho-L-threonyl-[protein] + H2O = L-threonyl-[protein] + phosphate. The protein is Probable protein phosphatase 2C 62 of Oryza sativa subsp. japonica (Rice).